The following is a 147-amino-acid chain: Ribonuclease 4 (147 aa).

The N-terminal stretch at 1–28 (MALQRTHSLLLLLLLTLLGLGLVQPSYG) is a signal peptide. At Gln-29 the chain carries Pyrrolidone carboxylic acid. 5 residues coordinate dUMP: Arg-35, His-40, Lys-68, Asn-71, and Thr-72. His-40 serves as the catalytic Proton acceptor. Intrachain disulfides connect Cys-53–Cys-109, Cys-67–Cys-120, Cys-85–Cys-135, and Cys-92–Cys-99. Residue His-144 is the Proton donor of the active site. Phe-145 is a binding site for dUMP.

This sequence belongs to the pancreatic ribonuclease family.

The protein localises to the secreted. Cleaves preferentially after uridine bases. Has antimicrobial activity against uropathogenic E.coli (UPEC). Probably contributes to urinary tract sterility. This chain is Ribonuclease 4 (RNASE4), found in Pan troglodytes (Chimpanzee).